Consider the following 359-residue polypeptide: Chorismate synthase (359 aa).

Arg-47 serves as a coordination point for NADP(+). Residues 123–125 (RSS), Gly-283, 298–302 (KPTSS), and Arg-326 contribute to the FMN site.

This sequence belongs to the chorismate synthase family. As to quaternary structure, homotetramer. FMNH2 is required as a cofactor.

The enzyme catalyses 5-O-(1-carboxyvinyl)-3-phosphoshikimate = chorismate + phosphate. It functions in the pathway metabolic intermediate biosynthesis; chorismate biosynthesis; chorismate from D-erythrose 4-phosphate and phosphoenolpyruvate: step 7/7. In terms of biological role, catalyzes the anti-1,4-elimination of the C-3 phosphate and the C-6 proR hydrogen from 5-enolpyruvylshikimate-3-phosphate (EPSP) to yield chorismate, which is the branch point compound that serves as the starting substrate for the three terminal pathways of aromatic amino acid biosynthesis. This reaction introduces a second double bond into the aromatic ring system. This Chlamydia felis (strain Fe/C-56) (Chlamydophila felis) protein is Chorismate synthase.